Consider the following 321-residue polypeptide: Lipoyl synthase (321 aa).

Residues C68, C73, C79, C94, C98, C101, and S308 each coordinate [4Fe-4S] cluster. One can recognise a Radical SAM core domain in the interval 80–297; that stretch reads FNHGTATFMI…KAIALDLGFT (218 aa).

It belongs to the radical SAM superfamily. Lipoyl synthase family. The cofactor is [4Fe-4S] cluster.

The protein resides in the cytoplasm. It catalyses the reaction [[Fe-S] cluster scaffold protein carrying a second [4Fe-4S](2+) cluster] + N(6)-octanoyl-L-lysyl-[protein] + 2 oxidized [2Fe-2S]-[ferredoxin] + 2 S-adenosyl-L-methionine + 4 H(+) = [[Fe-S] cluster scaffold protein] + N(6)-[(R)-dihydrolipoyl]-L-lysyl-[protein] + 4 Fe(3+) + 2 hydrogen sulfide + 2 5'-deoxyadenosine + 2 L-methionine + 2 reduced [2Fe-2S]-[ferredoxin]. The protein operates within protein modification; protein lipoylation via endogenous pathway; protein N(6)-(lipoyl)lysine from octanoyl-[acyl-carrier-protein]: step 2/2. Functionally, catalyzes the radical-mediated insertion of two sulfur atoms into the C-6 and C-8 positions of the octanoyl moiety bound to the lipoyl domains of lipoate-dependent enzymes, thereby converting the octanoylated domains into lipoylated derivatives. This is Lipoyl synthase from Tolumonas auensis (strain DSM 9187 / NBRC 110442 / TA 4).